Reading from the N-terminus, the 288-residue chain is B3 domain-containing protein At2g35310 (288 aa).

DNA-binding regions (TF-B3) lie at residues 19-114 (FFKV…FMQD) and 196-288 (AEFS…VSKP).

It is found in the nucleus. In Arabidopsis thaliana (Mouse-ear cress), this protein is B3 domain-containing protein At2g35310.